The chain runs to 141 residues: Nucleoside diphosphate kinase (141 aa).

ATP contacts are provided by K11, F59, R87, T93, R104, and N114. The active-site Pros-phosphohistidine intermediate is H117.

It belongs to the NDK family. In terms of assembly, homotetramer. Mg(2+) is required as a cofactor.

It is found in the cytoplasm. It carries out the reaction a 2'-deoxyribonucleoside 5'-diphosphate + ATP = a 2'-deoxyribonucleoside 5'-triphosphate + ADP. It catalyses the reaction a ribonucleoside 5'-diphosphate + ATP = a ribonucleoside 5'-triphosphate + ADP. Its function is as follows. Major role in the synthesis of nucleoside triphosphates other than ATP. The ATP gamma phosphate is transferred to the NDP beta phosphate via a ping-pong mechanism, using a phosphorylated active-site intermediate. This chain is Nucleoside diphosphate kinase, found in Pseudomonas entomophila (strain L48).